The following is a 327-amino-acid chain: Fumigatonoid B endoperoxide isomerase nvfE (327 aa).

Residues 1–22 (MGRDQVSHKRSQNSNVSEIPDL) form a disordered region. His152, Asp154, and His234 together coordinate Fe cation.

It belongs to the PhyH family. As to quaternary structure, homodimer. Fe cation serves as cofactor.

It carries out the reaction fumigatonoid B = fumigatonoid C. The protein operates within secondary metabolite biosynthesis; terpenoid biosynthesis. Its function is as follows. Fumigatonoid B endoperoxide isomerase; part of the gene cluster that mediates the biosynthesis of novofumigatonin, a heavily oxygenated meroterpenoid containing a unique orthoester moiety. The first step of the pathway is the synthesis of 3,5-dimethylorsellinic acid (DMOA) by the polyketide synthase nvfA via condensation of one acetyl-CoA starter unit with 3 malonyl-CoA units and 2 methylations. DMOA is then converted to farnesyl-DMOA by the farnesyltransferase nvfB. Epoxydation by FAD-dependent monooxygenase nvfK, followed by a protonation-initiated cyclization catalyzed by the terpene cyclase nvfL leads to the production of asnavolin H. The short chain dehydrogenase nvfC then as a 3-OH dehydrogenase of asnovolin H to yield chemesin D. There are two branches to synthesize asnovolin A from chemesin D. In one branch, chemesin D undergoes Baeyer-Villiger oxidation by nvfH, methylation by nvfJ, and enoyl reduction by the nvfM D enoylreductase that reduces the double bond between C-5'and C-6', to form respectively asnovolin I, asnovolin K, and asnovolin A. In the other branch, the methylation precedes the Baeyer-Villiger oxidation and the enoyl reduction to yield asnovolin A via the asnovolin J intermediate. Asnovolin A is further converted to fumigatonoid A by the Fe(II)/2-oxoglutarate-dependent dioxygenase nvfI that catalyzes an endoperoxidation reaction. The alpha/beta hydrolase nvfD then acts as an epimerase that converts fumigatonoid A to its C-5' epimer, which then undergoes spontaneous or nvfD-catalyzed lactonization. The following step utilizes the ketoreductase nvfG to produce fumigatonoid B. The dioxygenase nvfE further converts fumigatonoid B into fumigatonoid C. Finally the Fe(II)/2-oxoglutarate-dependent dioxygenase nvfF catalyzes two rounds of oxidation to transform fumigatonoid C into the end product, novofumigatonin A. This chain is Fumigatonoid B endoperoxide isomerase nvfE, found in Aspergillus novofumigatus (strain IBT 16806).